Consider the following 227-residue polypeptide: Ribonuclease 3 (227 aa).

In terms of domain architecture, RNase III spans 4–126 (LDRLERKIGY…IIGAMSLDQG (123 aa)). Residue Glu39 coordinates Mg(2+). Asp43 is an active-site residue. 2 residues coordinate Mg(2+): Asp112 and Glu115. Glu115 is a catalytic residue. A DRBM domain is found at 153–226 (DAKTRLQEYL…AEQILKELDI (74 aa)).

The protein belongs to the ribonuclease III family. As to quaternary structure, homodimer. It depends on Mg(2+) as a cofactor.

It is found in the cytoplasm. It carries out the reaction Endonucleolytic cleavage to 5'-phosphomonoester.. Digests double-stranded RNA. Involved in the processing of primary rRNA transcript to yield the immediate precursors to the large and small rRNAs (23S and 16S). Processes some mRNAs, and tRNAs when they are encoded in the rRNA operon. Processes pre-crRNA and tracrRNA of type II CRISPR loci if present in the organism. In Haemophilus influenzae (strain PittGG), this protein is Ribonuclease 3.